Consider the following 545-residue polypeptide: Chaperonin GroEL 2 (545 aa).

ATP contacts are provided by residues 29–32 (TLGP), 86–90 (DGTTT), Gly414, and Asp499.

It belongs to the chaperonin (HSP60) family. Forms a cylinder of 14 subunits composed of two heptameric rings stacked back-to-back. Interacts with the co-chaperonin GroES.

It localises to the cytoplasm. It catalyses the reaction ATP + H2O + a folded polypeptide = ADP + phosphate + an unfolded polypeptide.. Its function is as follows. Together with its co-chaperonin GroES, plays an essential role in assisting protein folding. The GroEL-GroES system forms a nano-cage that allows encapsulation of the non-native substrate proteins and provides a physical environment optimized to promote and accelerate protein folding. The protein is Chaperonin GroEL 2 of Chloroflexus aurantiacus (strain ATCC 29366 / DSM 635 / J-10-fl).